We begin with the raw amino-acid sequence, 597 residues long: MAEIIQERIEDRLPELEQLERIGLFSHAEIKAIIKKASDLEYKIQRRTLFKEDFINYVQYEINLLELIQRRRTRIGYSFKKDEIENSIVHRVQGVFQRASAKWKDDVQLWLSYVAFCKKWATKTRLSKVFSAMLAIHSNKPALWIMAAKWEMEDRLSSESARQLFLRALRFHPECPKLYKEYFRMELMHAEKLRKEKEEFEKASMDVENPDYSEEILKGELAWIIYKNSVSIIKGAEFHVSLLSIAQLFDFAKDLQKEIYDDLQALHTDDPLTWDYVARRELEIESQTEEQPTTKQAKAVEVGRKEERCCAVYEEAVKTLPTEAMWKCYITFCLERFTKKSNSGFLRGKRLERTMTVFRKAHELKLLSECQYKQLSVSLLCYNFLREALEVAVAGTELFRDSGTMWQLKLQVLIESKSPDIAMLFEEAFVHLKPQVCLPLWISWAEWSEGAKSQEDTEAVFKKALLAVIGADSVTLKNKYLDWAYRSGGYKKARAVFKSLQESRPFSVDFFRKMIQFEKEQESCNMANIREYYERALREFGSADSDLWMDYMKEELNHPLGRPENCGQIYWRAMKMLQGESAEAFVAKHAMHQTGHL.

5 HAT repeats span residues 121 to 153 (ATKT…WEME), 156 to 188 (LSSE…MELM), 304 to 335 (RKEE…FCLE), 488 to 520 (GGYK…FEKE), and 524 to 557 (CNMA…EELN).

The protein belongs to the UTP6 family. As to quaternary structure, part of the small subunit (SSU) processome, composed of more than 70 proteins and the RNA chaperone small nucleolar RNA (snoRNA) U3.

It is found in the nucleus. Its subcellular location is the nucleolus. Part of the small subunit (SSU) processome, first precursor of the small eukaryotic ribosomal subunit. During the assembly of the SSU processome in the nucleolus, many ribosome biogenesis factors, an RNA chaperone and ribosomal proteins associate with the nascent pre-rRNA and work in concert to generate RNA folding, modifications, rearrangements and cleavage as well as targeted degradation of pre-ribosomal RNA by the RNA exosome. Involved in nucleolar processing of pre-18S ribosomal RNA. This is U3 small nucleolar RNA-associated protein 6 homolog from Homo sapiens (Human).